The primary structure comprises 658 residues: tRNA uridine 5-carboxymethylaminomethyl modification enzyme MnmG (658 aa).

13–18 is a binding site for FAD; the sequence is GAGHAG. Position 285-299 (285-299) interacts with NAD(+); it reads GPRYCPSVEDKINRF.

Belongs to the MnmG family. In terms of assembly, homodimer. Heterotetramer of two MnmE and two MnmG subunits. It depends on FAD as a cofactor.

It is found in the cytoplasm. NAD-binding protein involved in the addition of a carboxymethylaminomethyl (cmnm) group at the wobble position (U34) of certain tRNAs, forming tRNA-cmnm(5)s(2)U34. In Verminephrobacter eiseniae (strain EF01-2), this protein is tRNA uridine 5-carboxymethylaminomethyl modification enzyme MnmG.